Here is a 248-residue protein sequence, read N- to C-terminus: MSGDLSRCLGKGSCPPGPVPEGVIRIYSMRFCPYSHRARLVLKAKGIRHEVININLKSKPDWYYTKHPFGQIPVLENSQCQLVYESVIACEYLDDVYPGRKLFPYDPYERARQKMLLELFCKVPPLSKECLIALRCGRDCTDLKVALRQELCNMEEILEYQNTTFFGGDCISMIDYLVWPWFERLDVYGLADCVNHTPMLRLWIASMKQDPAVCALHTDKSVFLGFLNLYFQNNPCAFDFGLCNPIIR.

The GST N-terminal domain maps to 22–101 (GVIRIYSMRF…YLDDVYPGRK (80 aa)). Residue Cys32 is the Nucleophile of the active site. Residues Lys59, Ile72, and 85–86 (ES) each bind glutathione. One can recognise a GST C-terminal domain in the interval 106–231 (DPYERARQKM…VFLGFLNLYF (126 aa)).

Belongs to the GST superfamily. Omega family.

The catalysed reaction is RX + glutathione = an S-substituted glutathione + a halide anion + H(+). It carries out the reaction L-dehydroascorbate + 2 glutathione = glutathione disulfide + L-ascorbate. The enzyme catalyses methylarsonate + 2 glutathione + H(+) = methylarsonous acid + glutathione disulfide + H2O. Exhibits glutathione-dependent thiol transferase activity. Has high dehydroascorbate reductase activity and may contribute to the recycling of ascorbic acid. Participates in the biotransformation of inorganic arsenic and reduces monomethylarsonic acid (MMA). The sequence is that of Glutathione S-transferase omega-2 (Gsto2) from Mus musculus (Mouse).